A 321-amino-acid polypeptide reads, in one-letter code: High osmolarity signaling protein SHO1A (321 aa).

The Cytoplasmic segment spans residues 1–28 (MDYNNNRYGGGGGGSKFNLGHIVGDPFS). Residues 29-49 (LATIAIATAGWLIAFVSSIIA) traverse the membrane as a helical segment. Over 50–58 (NIDQEYPNY) the chain is Extracellular. N-linked (GlcNAc...) asparagine glycosylation is present at asparagine 57. Residues 59-79 (SWWALAYMFFVILGVTFAVAA) form a helical membrane-spanning segment. Asparagine 80 is a topological domain (cytoplasmic). The chain crosses the membrane as a helical span at residues 81–101 (AVYTYHVAMVGFLAAGLVFTT). Residues 102-116 (SSVNSLIYWSDKAKQ) lie on the Extracellular side of the membrane. The helical transmembrane segment at 117 to 137 (AAAAGFILLSMVSIVWIFYFG) threads the bilayer. Residues 138-321 (SQPTASHRQT…IAPSNYLILL (184 aa)) lie on the Cytoplasmic side of the membrane. 2 disordered regions span residues 155–181 (KDHA…AQHP) and 194–261 (TSSP…QQPT). 2 stretches are compositionally biased toward polar residues: residues 165-181 (HMTQ…AQHP) and 225-237 (NFSN…PITS). A compositionally biased stretch (low complexity) spans 238-249 (QNNPQNQHQQPQ). Positions 250 to 261 (DLTSPSTTQQPT) are enriched in polar residues. Positions 262–321 (EYPYRAKAIYSYEANPDDANEISFNKHEILEVSDVSGRWWQAKKENGETGIAPSNYLILL) constitute an SH3 domain.

It belongs to the SHO1 family. In terms of assembly, forms homooligomers.

The protein localises to the cell membrane. Functionally, plasma membrane osmosensor that activates the high osmolarity glycerol (HOG) MAPK signaling pathway in response to high osmolarity. In Hortaea werneckii, this protein is High osmolarity signaling protein SHO1A (SHO1A).